Reading from the N-terminus, the 700-residue chain is ATP-dependent zinc metalloprotease FtsH (700 aa).

Topologically, residues 1-20 are cytoplasmic; the sequence is MSSDNGSGRQGGDRGGSTGY. The chain crosses the membrane as a helical span at residues 21-41; that stretch reads NLLMYLGFGAIIATLVALYVL. The Periplasmic portion of the chain corresponds to 42-171; that stretch reads QMFQTSLDYT…FRHADPPGPW (130 aa). Residues 172-192 traverse the membrane as a helical segment; sequence EQHSQLIIGMLLAAMLIYIVV. Over 193-700 the chain is Cytoplasmic; it reads RRLSAAGSPM…ITAPATERSG (508 aa). Residue 262-269 participates in ATP binding; sequence GPPGTGKT. Histidine 484 serves as a coordination point for Zn(2+). Glutamate 485 is a catalytic residue. Zn(2+)-binding residues include histidine 488 and aspartate 561.

The protein in the central section; belongs to the AAA ATPase family. In the C-terminal section; belongs to the peptidase M41 family. In terms of assembly, homohexamer. Zn(2+) serves as cofactor.

The protein localises to the cell inner membrane. Functionally, acts as a processive, ATP-dependent zinc metallopeptidase for both cytoplasmic and membrane proteins. Plays a role in the quality control of integral membrane proteins. In Pirellula staleyi (strain ATCC 27377 / DSM 6068 / ICPB 4128) (Pirella staleyi), this protein is ATP-dependent zinc metalloprotease FtsH.